The primary structure comprises 663 residues: Zinc finger protein GLI2 (663 aa).

Residues 159–186 are disordered; the sequence is ISSNSNCISDSSQSKQSSESAVSSTVNP. Positions 160–182 are enriched in low complexity; it reads SSNSNCISDSSQSKQSSESAVSS. 5 consecutive C2H2-type zinc fingers follow at residues 234-259, 267-294, 300-324, 330-355, and 361-386; these read TNCH…NNDH, FVCR…MRRH, HKCT…LRSH, YVCE…NRTH, and YVCK…KTVH. Disordered regions lie at residues 374 to 440, 452 to 481, 544 to 578, and 619 to 663; these read DPSS…MEDC, VMCQ…DSGV, CSWV…SRTL, and SGIS…DIKL. Residues 386–402 show a composition bias toward basic and acidic residues; the sequence is HGPDAHVTKKQRNDVHP. The span at 456-473 shows a compositional bias: low complexity; sequence SSPGGQSSCSSEPSPLGS. Polar residues-rich tracts occupy residues 563–578 and 619–647; these read GNGS…SRTL and SGIS…SSAD.

This sequence belongs to the GLI C2H2-type zinc-finger protein family.

The protein resides in the nucleus. Its subcellular location is the cytoplasm. It localises to the cell projection. It is found in the cilium. Functions as a transcription regulator in the hedgehog (Hh) pathway. Functions as a transcriptional activator. May also function as transcriptional repressor. Binds to the DNA sequence 5'-GAACCACCCA-3'. Is involved in the smoothened (SHH) signaling pathway. Required for normal skeleton development. In Gallus gallus (Chicken), this protein is Zinc finger protein GLI2.